The following is a 370-amino-acid chain: MLDDFKIDLLVKNKPPTSTTAVVAMSGGVDSSVAAALLHKLGYKVIGITLQLYNNNKNSNTKGACCGSLDTKDAKQVASSMGFPHYTLNYEKVFREEVIEDFIDTYTQGKTPIPCIKCNQVIKFRDLLNATKSLGADVLVTGHYIRKIEQDDDIYVYSSKDTKKDQSYFLFATTVEQLRLLRFPLGNFHKEDIRKLAKYFNLQVANKPDSQNICFVTDTYKKTIAELRPHTIKKGNIIDINGNILSQHNGIVNFTIGQRKGIGISSKAPLYVIKLNPDTNEVTVGPKSALLQNKLYIREINWLAKEKIPHNGLNVKVKLRSSHSGSPATIFPNNNNTATILLQDSYCTVTPGQACVIYDHDRMLGGGWIC.

ATP-binding positions include 24 to 31 and leucine 50; that span reads AMSGGVDS. The active-site Nucleophile is cysteine 118. Cysteine 118 and cysteine 214 are oxidised to a cystine. Glycine 142 is an ATP binding site. Residues 164-166 are interaction with tRNA; that stretch reads KDQ. The Cysteine persulfide intermediate role is filled by cysteine 214.

It belongs to the MnmA/TRMU family.

The protein localises to the cytoplasm. It carries out the reaction S-sulfanyl-L-cysteinyl-[protein] + uridine(34) in tRNA + AH2 + ATP = 2-thiouridine(34) in tRNA + L-cysteinyl-[protein] + A + AMP + diphosphate + H(+). In terms of biological role, catalyzes the 2-thiolation of uridine at the wobble position (U34) of tRNA, leading to the formation of s(2)U34. This Ehrlichia ruminantium (strain Gardel) protein is tRNA-specific 2-thiouridylase MnmA.